The chain runs to 312 residues: Ribosomal RNA small subunit methyltransferase H (312 aa).

The interval 1–24 is disordered; the sequence is MNIMTANQGAVSPSQTESEASPPT. Residues 55 to 57, D72, Y96, D117, and Q124 each bind S-adenosyl-L-methionine; that span reads AGH. The segment at 288-312 is disordered; sequence EQVDNPRARSAKLRVGERAAAPEGS.

It belongs to the methyltransferase superfamily. RsmH family.

It localises to the cytoplasm. The catalysed reaction is cytidine(1402) in 16S rRNA + S-adenosyl-L-methionine = N(4)-methylcytidine(1402) in 16S rRNA + S-adenosyl-L-homocysteine + H(+). In terms of biological role, specifically methylates the N4 position of cytidine in position 1402 (C1402) of 16S rRNA. The protein is Ribosomal RNA small subunit methyltransferase H of Deinococcus radiodurans (strain ATCC 13939 / DSM 20539 / JCM 16871 / CCUG 27074 / LMG 4051 / NBRC 15346 / NCIMB 9279 / VKM B-1422 / R1).